The primary structure comprises 517 residues: Benzoate 4-monooxygenase bphA (517 aa).

The helical transmembrane segment at L4 to L24 threads the bilayer. N-linked (GlcNAc...) asparagine glycans are attached at residues N282 and N325. C461 lines the heme pocket.

Belongs to the cytochrome P450 family. The cofactor is heme.

The protein resides in the membrane. The enzyme catalyses benzoate + reduced [NADPH--hemoprotein reductase] + O2 = 4-hydroxybenzoate + oxidized [NADPH--hemoprotein reductase] + H2O + H(+). Its function is as follows. Cytochrome P450 monooxygenase; part of the benzoic acid degradation pathway also known as the protocatechuic acid pathway. Benzoic acid debradation begins with the conversion of benzoic acid into 4-hydroxybenzoic acid through hydroxylation by the benzoate-4-monooxygenase bphA, and its partner NADPH-cytochrome P450 reductase cprA which act as a mediator in electron donation from NADPH. 4-Hydroxybenzoic acid is then converted into 3,4-dihydroxybenzoic acid (also called protocatechuic acid) by the p-hydroxybenzoate-m-hydroxylase phhA. Protocatechuic acid is converted into 3-carboxy-cis,cis-muconic acid by the intradiol ring-cleavage dioxygenase prcA, which is further metabolized through the 3-oxoadipate pathway to finally enter the tricarboxylic acid cycle (TCA). In Aspergillus niger (strain ATCC MYA-4892 / CBS 513.88 / FGSC A1513), this protein is Benzoate 4-monooxygenase bphA.